A 162-amino-acid chain; its full sequence is ATP synthase subunit b (162 aa).

A helical transmembrane segment spans residues 6 to 28; sequence LVTFVLTIVNILVLFYLLKRFLF.

It belongs to the ATPase B chain family. F-type ATPases have 2 components, F(1) - the catalytic core - and F(0) - the membrane proton channel. F(1) has five subunits: alpha(3), beta(3), gamma(1), delta(1), epsilon(1). F(0) has three main subunits: a(1), b(2) and c(10-14). The alpha and beta chains form an alternating ring which encloses part of the gamma chain. F(1) is attached to F(0) by a central stalk formed by the gamma and epsilon chains, while a peripheral stalk is formed by the delta and b chains.

It is found in the cell membrane. Its function is as follows. F(1)F(0) ATP synthase produces ATP from ADP in the presence of a proton or sodium gradient. F-type ATPases consist of two structural domains, F(1) containing the extramembraneous catalytic core and F(0) containing the membrane proton channel, linked together by a central stalk and a peripheral stalk. During catalysis, ATP synthesis in the catalytic domain of F(1) is coupled via a rotary mechanism of the central stalk subunits to proton translocation. Functionally, component of the F(0) channel, it forms part of the peripheral stalk, linking F(1) to F(0). This is ATP synthase subunit b from Natranaerobius thermophilus (strain ATCC BAA-1301 / DSM 18059 / JW/NM-WN-LF).